Consider the following 80-residue polypeptide: Raniseptin-6 (80 aa).

Positions 1 to 22 are cleaved as a signal peptide; it reads MAFLKKSLFLVLFLGIVSLSIC. Residues 23-49 constitute a propeptide that is removed on maturation; that stretch reads EEEKREGEEEEKQEEENEELSEEELRE.

It belongs to the frog skin active peptide (FSAP) family. Dermaseptin subfamily. Expressed by the skin glands.

It is found in the secreted. Its function is as follows. Has antibacterial activity. The polypeptide is Raniseptin-6 (Boana raniceps (Chaco tree frog)).